Reading from the N-terminus, the 307-residue chain is Protein FAM76A (307 aa).

Disordered stretches follow at residues 161–181 (SRLS…SSIQ) and 287–307 (KQAA…ITSP). Residues 217–297 (IIAQLKEEVA…QAAALSKGKK (81 aa)) adopt a coiled-coil conformation.

It belongs to the FAM76 family.

This is Protein FAM76A (FAM76A) from Gallus gallus (Chicken).